Here is a 658-residue protein sequence, read N- to C-terminus: Glycogen debranching enzyme (658 aa).

The active-site Nucleophile is the Asp-335. The Proton donor role is filled by Glu-370. Residues 457 to 468 (NDANGEGNRDGT) show a composition bias toward basic and acidic residues. Residues 457–478 (NDANGEGNRDGTDSNFSNNHGT) are disordered.

Belongs to the glycosyl hydrolase 13 family.

It carries out the reaction Hydrolysis of (1-&gt;6)-alpha-D-glucosidic linkages to branches with degrees of polymerization of three or four glucose residues in limit dextrin.. It functions in the pathway glycan degradation; glycogen degradation. Removes maltotriose and maltotetraose chains that are attached by 1,6-alpha-linkage to the limit dextrin main chain, generating a debranched limit dextrin. The protein is Glycogen debranching enzyme of Pectobacterium carotovorum subsp. carotovorum (strain PC1).